A 261-amino-acid chain; its full sequence is Kynurenine formamidase (261 aa).

The residue at position 9 (Ser-9) is a Phosphoserine. Residues 36-40 (HGGAW) carry the HGGXW motif. Residue Ser-110 is the Nucleophile of the active site. Active-site residues include Asp-211 and His-243.

The protein belongs to the kynurenine formamidase family. In terms of assembly, homodimer.

The enzyme catalyses N-formyl-L-kynurenine + H2O = L-kynurenine + formate + H(+). It participates in amino-acid degradation; L-tryptophan degradation via kynurenine pathway; L-kynurenine from L-tryptophan: step 2/2. Functionally, catalyzes the hydrolysis of N-formyl-L-kynurenine to L-kynurenine, the second step in the kynurenine pathway of tryptophan degradation. Kynurenine may be further oxidized to nicotinic acid, NAD(H) and NADP(H). Required for elimination of toxic metabolites. The protein is Kynurenine formamidase of Saccharomyces cerevisiae (strain ATCC 204508 / S288c) (Baker's yeast).